Consider the following 206-residue polypeptide: Ras-related protein RABG3c (206 aa).

15 to 22 (GDSGVGKT) is a binding site for GTP. The short motif at 37–45 (YKATIGADF) is the Effector region element. GTP contacts are provided by residues 63–67 (DTAGQ), 125–128 (NKTD), and 158–159 (SA). 2 S-geranylgeranyl cysteine lipidation sites follow: C204 and C206. C206 bears the Cysteine methyl ester mark.

It belongs to the small GTPase superfamily. Rab family.

The protein resides in the cell membrane. In terms of biological role, intracellular vesicle trafficking and protein transport. The sequence is that of Ras-related protein RABG3c (RABG3C) from Arabidopsis thaliana (Mouse-ear cress).